The chain runs to 330 residues: Protein ANTHESIS POMOTING FACTOR 1 (330 aa).

6 WD repeats span residues 22–61 (DFGG…QLKI), 112–151 (GHKD…CQGI), 153–191 (HLRG…KGPF), 198–237 (GDTA…KKCG), 242–281 (PSQG…EVAR), and 284–323 (NNIG…APAD).

It belongs to the WD repeat SWD2 family. In terms of tissue distribution, expressed in the shoot apical meristem (SAM), embryos, seedlings, cotyledons, leaves primordia, young leaves and roots.

The protein resides in the nucleus. Component of a chromatin regulatory complex involved in regulating chromatin structure in the nucleus. Promotes flowering under long days (LD) via the regulation of bolting. The sequence is that of Protein ANTHESIS POMOTING FACTOR 1 from Arabidopsis thaliana (Mouse-ear cress).